Consider the following 167-residue polypeptide: Bacterial non-heme ferritin (167 aa).

The Ferritin-like diiron domain occupies 1-145 (MLSKEVVKLL…GIVDKIKLIG (145 aa)). Positions 17, 50, 53, 94, and 127 each coordinate Fe cation.

Belongs to the ferritin family. Prokaryotic subfamily. Homooligomer of 24 subunits that assemble into a spherical protein shell (12 +/- 1 nM diameter) that can sequester at least 2000 iron atoms.

Its subcellular location is the cytoplasm. The catalysed reaction is 4 Fe(2+) + O2 + 6 H2O = 4 iron(III) oxide-hydroxide + 12 H(+). Functionally, iron-storage protein. The chain is Bacterial non-heme ferritin (ftn) from Campylobacter jejuni subsp. jejuni serotype O:2 (strain ATCC 700819 / NCTC 11168).